A 273-amino-acid polypeptide reads, in one-letter code: Large ribosomal subunit protein uL2 (273 aa).

2 disordered regions span residues 32–53 (PLVE…TTRH) and 221–273 (RGTA…RRSK). A compositionally biased stretch (low complexity) spans 39–48 (KSGGRNNNGR).

This sequence belongs to the universal ribosomal protein uL2 family. As to quaternary structure, part of the 50S ribosomal subunit. Forms a bridge to the 30S subunit in the 70S ribosome.

In terms of biological role, one of the primary rRNA binding proteins. Required for association of the 30S and 50S subunits to form the 70S ribosome, for tRNA binding and peptide bond formation. It has been suggested to have peptidyltransferase activity; this is somewhat controversial. Makes several contacts with the 16S rRNA in the 70S ribosome. In Erwinia tasmaniensis (strain DSM 17950 / CFBP 7177 / CIP 109463 / NCPPB 4357 / Et1/99), this protein is Large ribosomal subunit protein uL2.